The sequence spans 166 residues: Regulatory protein RecX (166 aa).

This sequence belongs to the RecX family.

The protein localises to the cytoplasm. Modulates RecA activity. This is Regulatory protein RecX from Escherichia coli (strain SE11).